A 259-amino-acid chain; its full sequence is Major cell-binding factor (259 aa).

The N-terminal stretch at 1–26 (MVFRKSLLKLAVFALGACVAFSNANA) is a signal peptide.

Belongs to the bacterial solute-binding protein 3 family.

Its subcellular location is the cell surface. Its function is as follows. Common antigen and a major cell adherence molecule. Most probably involved, with PEB1C, in a binding-protein-dependent transport system for an amino acid. May be involved in binding to intestinal cells. This Campylobacter jejuni subsp. jejuni serotype O:23/36 (strain 81-176) protein is Major cell-binding factor (peb1A).